Here is a 302-residue protein sequence, read N- to C-terminus: Gap junction delta-2 protein (302 aa).

Residues 1–19 (MGEWTILERLLEAAVQQHS) lie on the Cytoplasmic side of the membrane. A helical membrane pass occupies residues 20 to 42 (TMIGRILLTVVVIFRILVVAIVG). At 43–75 (ETVYDDEQTMFVCNTLQPGCNQACYDKAFPISH) the chain is on the extracellular side. Residues 76 to 98 (IRYWVFQIIMVCTPSLCFITYSV) form a helical membrane-spanning segment. At 99-177 (HQSSKQRERQ…KIRRQEGISR (79 aa)) the chain is on the cytoplasmic side. The helical transmembrane segment at 178-200 (FYIIQVVFRNALEIGFLMGQYFL) threads the bilayer. Residues 201–232 (YGFKVPSMYECNRYPCVKMVECYVSRPTEKTV) are Extracellular-facing. A helical membrane pass occupies residues 233 to 255 (FLVFMFAVSGLCVILNLAELNHL). Topologically, residues 256 to 302 (GWRKIKTAVRGAQERRKSIYEIRNKDSPHRIGVPNFGRTQSSDSAYV) are cytoplasmic.

Belongs to the connexin family. Delta-type subfamily. As to quaternary structure, a connexon is composed of a hexamer of connexins. As to expression, retinal specific.

The protein resides in the cell membrane. The protein localises to the cell junction. Its subcellular location is the gap junction. Its function is as follows. One gap junction consists of a cluster of closely packed pairs of transmembrane channels, the connexons, through which materials of low MW diffuse from one cell to a neighboring cell. The chain is Gap junction delta-2 protein from Leucoraja erinaceus (Little skate).